Here is a 184-residue protein sequence, read N- to C-terminus: Chaperone protein dnaJ 72 (184 aa).

A J domain is found at 3 to 73; it reads DHYQVLGVTR…LKRASYNAGS (71 aa). Residues 133 to 150 form a helical membrane-spanning segment; the sequence is FLLNLALAGGLYFAFTAI.

This sequence belongs to the DnaJ family. C/III subfamily.

It localises to the membrane. Its function is as follows. Plays a continuous role in plant development probably in the structural organization of compartments. The polypeptide is Chaperone protein dnaJ 72 (ATJ72) (Arabidopsis thaliana (Mouse-ear cress)).